The sequence spans 108 residues: Small proline-rich protein 2H (108 aa).

Positions 1 to 11 (MSYQQQQCKQP) are enriched in low complexity. The interval 1–22 (MSYQQQQCKQPCQPPPVCPPPQ) is disordered. Residues 12–22 (CQPPPVCPPPQ) are compositionally biased toward pro residues. A run of 7 repeats spans residues 21–29 (PQCPEPCPP), 30–38 (PKCPEPCPP), 39–47 (PKCTEPCPP), 48–56 (PKCPEPCPP), 57–65 (PKCPEPCPP), 66–74 (PKCPEPCPP), and 75–83 (PKCTEPCPP). Residues 21–83 (PQCPEPCPPP…PPKCTEPCPP (63 aa)) form a 7 X 9 AA tandem repeats of P-[KQ]-C-[PT]-E-P-C-P-P region. Positions 83-108 (PPSYQQKCPSVQPSPPCQQKCPPKNK) are disordered. The segment covering 87 to 108 (QQKCPSVQPSPPCQQKCPPKNK) has biased composition (low complexity).

This sequence belongs to the cornifin (SPRR) family. In terms of tissue distribution, expressed weakly in uterus.

It is found in the cytoplasm. Its function is as follows. Cross-linked envelope protein of keratinocytes. It is a keratinocyte protein that first appears in the cell cytosol, but ultimately becomes cross-linked to membrane proteins by transglutaminase. All that results in the formation of an insoluble envelope beneath the plasma membrane. The polypeptide is Small proline-rich protein 2H (Sprr2h) (Mus musculus (Mouse)).